We begin with the raw amino-acid sequence, 314 residues long: Olfactory receptor 52H1 (314 aa).

The Extracellular portion of the chain corresponds to Met1–Pro32. A glycan (N-linked (GlcNAc...) asparagine) is linked at Asn5. A helical transmembrane segment spans residues Phe33 to Val53. Residues Glu54–Glu59 lie on the Cytoplasmic side of the membrane. A helical transmembrane segment spans residues Pro60–Val80. Residues Pro81–Thr101 lie on the Extracellular side of the membrane. An intrachain disulfide couples Cys99 to Cys181. A helical transmembrane segment spans residues Gln102–Phe122. Topologically, residues Asp123–Gly149 are cytoplasmic. The helical transmembrane segment at Ile150–Phe170 threads the bilayer. At Cys171–Asn197 the chain is on the extracellular side. Residues Phe198–Val218 traverse the membrane as a helical segment. The Cytoplasmic portion of the chain corresponds to Ser219–Thr242. A helical membrane pass occupies residues Cys243–Ala263. Residues His264 to His275 lie on the Extracellular side of the membrane. Asn269 is a glycosylation site (N-linked (GlcNAc...) asparagine). Residues Ile276–Val296 form a helical membrane-spanning segment. The Cytoplasmic segment spans residues Lys297–Gly314.

It belongs to the G-protein coupled receptor 1 family.

The protein resides in the membrane. In terms of biological role, odorant receptor. The protein is Olfactory receptor 52H1 (OR52H1) of Homo sapiens (Human).